The following is a 273-amino-acid chain: Progestin and adipoQ receptor family member 4 (273 aa).

6 consecutive transmembrane segments (helical) span residues 52–72 (IYTHGLALLGFLVLVPMTMPW), 79–99 (GWLGGTHCVACLAPPAGSVLY), 115–135 (LLALDMCGVCLVNTLGALPII), 147–167 (PAALVGYTVLSGVAGWRALTA), 185–205 (LLVFGARGVGLGSGAPGSLPC), and 245–265 (LLSVGSILQLHAGVVPDLLWA).

It belongs to the ADIPOR family. As to quaternary structure, interacts with CERS2 and CERS5; the interaction regulates CERS2 and CERS5 stabilities and activities and is inhibited in presence of ceramides. Relatively widely expressed in a range of tissues. Expressed in subcutaneous white adipose tissue.

It localises to the golgi apparatus membrane. In terms of biological role, plays a role in maintaining adipose tissue function through the regulation of ceramide levels. Mediates the stability of ceramide synthetases, CERS2 and CERS5, and their activities. This is Progestin and adipoQ receptor family member 4 from Homo sapiens (Human).